A 170-amino-acid chain; its full sequence is Adenine phosphoribosyltransferase (170 aa).

The protein belongs to the purine/pyrimidine phosphoribosyltransferase family. In terms of assembly, homodimer.

It is found in the cytoplasm. The catalysed reaction is AMP + diphosphate = 5-phospho-alpha-D-ribose 1-diphosphate + adenine. It participates in purine metabolism; AMP biosynthesis via salvage pathway; AMP from adenine: step 1/1. In terms of biological role, catalyzes a salvage reaction resulting in the formation of AMP, that is energically less costly than de novo synthesis. This is Adenine phosphoribosyltransferase from Halothermothrix orenii (strain H 168 / OCM 544 / DSM 9562).